The chain runs to 38 residues: Photosystem II reaction center protein X 1 (38 aa).

The chain crosses the membrane as a helical span at residues 8 to 28; that stretch reads FLWSLLYGAVVLGLLFGAIVF.

It belongs to the PsbX family. Type 1 subfamily. In terms of assembly, PSII is composed of 1 copy each of membrane proteins PsbA, PsbB, PsbC, PsbD, PsbE, PsbF, PsbH, PsbI, PsbJ, PsbK, PsbL, PsbM, PsbT, PsbX, PsbY, PsbZ, Psb30/Ycf12, peripheral proteins PsbO, CyanoQ (PsbQ), PsbU, PsbV and a large number of cofactors. It forms dimeric complexes.

The protein localises to the cellular thylakoid membrane. Involved in the binding and/or turnover of quinones at the Q(B) site of photosystem II (PSII). PSII is a light-driven water plastoquinone oxidoreductase, using light energy to abstract electrons from H(2)O, generating a proton gradient subsequently used for ATP formation. The protein is Photosystem II reaction center protein X 1 of Synechococcus sp. (strain JA-3-3Ab) (Cyanobacteria bacterium Yellowstone A-Prime).